Here is a 1006-residue protein sequence, read N- to C-terminus: DNA polymerase (1006 aa).

Belongs to the DNA polymerase type-B family. Interacts with OPG148. Component of the Uracil-DNA glycosylase(UDG)-OPG148-polymerase complex; OPG148 and OPG116/UDG form a heterodimeric processivity factor that associates with OPG071 to form the processive polymerase holoenzyme.

It carries out the reaction DNA(n) + a 2'-deoxyribonucleoside 5'-triphosphate = DNA(n+1) + diphosphate. Its function is as follows. Catalyzes DNA synthesis. Acquires processivity by associating with a heterodimeric processivity factor comprised of the viral OPG148 and OPG116 proteins, thereby forming the DNA polymerase holoenzyme. Displays 3'- to 5' exonuclease activity. Might participate in viral DNA recombination. Does not perform OPG116/D4synthesis across an abasic site. This chain is DNA polymerase (OPG071), found in Monkeypox virus.